We begin with the raw amino-acid sequence, 1860 residues long: Collagen alpha-1(XXVII) chain (1860 aa).

An N-terminal signal peptide occupies residues 1 to 41; sequence MGAGSARGARGTAAAAAARGGGFLFSWILVSFACHLASTQG. Residues 42–624 constitute a propeptide, N-terminal propeptide; sequence APEDVDILQR…AGSTPFPLLM (583 aa). Residues 71 to 236 enclose the Laminin G-like domain; that stretch reads QSGFIFTQRA…NYCTHLRKQC (166 aa). An N-linked (GlcNAc...) asparagine glycan is attached at asparagine 271. Disordered regions lie at residues 278-608, 625-772, and 851-1625; these read ALGS…TSSG, GPPG…GSDG, and LKGD…IQLQ. Composition is skewed to polar residues over residues 298–309 and 386–409; these read TKPQRTSPTNPH and HPTQKTAPSSFTKSALPTQKQVPP. A compositionally biased stretch (pro residues) spans 432-445; it reads MPRPPPPSTRPLPP. Composition is skewed to low complexity over residues 446–457 and 485–505; these read TTSSSKKPIPTL and TALSSSPAPTPGSTRSTRPPA. Positions 509 to 518 are enriched in polar residues; that stretch reads PPTSGTSTPR. Composition is skewed to low complexity over residues 572–588 and 599–608; these read TTRPSPRQPQPSQQTTP and SSSPRPTSSG. Collagen-like domains follow at residues 625 to 679, 688 to 747, 748 to 807, 808 to 867, 871 to 930, 931 to 990, 1003 to 1062, 1066 to 1125, 1126 to 1185, 1192 to 1251, 1258 to 1317, 1318 to 1378, 1382 to 1441, 1442 to 1501, 1502 to 1561, and 1562 to 1621; these read GPPG…GDPG, GAKG…PGPV, GDPG…DGNP, GELG…SGDP, GDKG…KGKP, GARG…PGPV, GEPG…RGAK, GPRG…PGTK, GLPG…IGQR, GDSG…QGEK, GAKG…KGIV, GPLG…RGKP, GQPG…EGIA, GPDG…PGQL, GPPG…QGPR, and GPPG…PGGP. A triple-helical region region spans residues 625–1618; that stretch reads GPPGPKGDCG…RGRPGPPGPP (994 aa). The span at 654–669 shows a compositional bias: pro residues; that stretch reads RGPPGPYGNPGLPGPP. Over residues 714-734 the composition is skewed to low complexity; the sequence is PGPAGHPGEQGQPGPEGSPGA. Low complexity-rich tracts occupy residues 911–924 and 932–944; these read FPGDIGPPGDNGPE and ARGLPGPRGQLGP. Gly residues predominate over residues 1033–1042; that stretch reads GMPGGMGTPG. Over residues 1043-1053 the composition is skewed to pro residues; that stretch reads EPGPQGPPGSR. Positions 1130-1142 are enriched in pro residues; it reads EPGPQGPQGPIGP. Basic and acidic residues-rich tracts occupy residues 1202–1220 and 1241–1253; these read LKGDRGDPGPDGEHGEKGQ and PEGKSGKQGEKGR. Basic and acidic residues-rich tracts occupy residues 1326–1338 and 1350–1360; these read KGEKGEQGEDGKA and PVGDRGDRGEP. The segment covering 1449–1458 has biased composition (low complexity); that stretch reads RDGQAGQQGE. Residues 1572–1587 are compositionally biased toward low complexity; it reads IVGPLGILGPSGLPGP. The span at 1603–1620 shows a compositional bias: pro residues; that stretch reads RGPPGPRGRPGPPGPPGG. A propeptide spans 1622 to 1860 (C-terminal propeptide); sequence IQLQQDDLGA…RLEVGPACFL (239 aa). Residues 1660 to 1860 form the Fibrillar collagen NC1 domain; it reads GEIFKTLHYL…RLEVGPACFL (201 aa). 3 disulfide bridges follow: cysteine 1690/cysteine 1722, cysteine 1731/cysteine 1858, and cysteine 1767/cysteine 1811. Residues aspartate 1708, asparagine 1710, cysteine 1713, and aspartate 1716 each coordinate Ca(2+). Asparagine 1769 carries an N-linked (GlcNAc...) asparagine glycan.

Belongs to the fibrillar collagen family.

Its subcellular location is the secreted. It is found in the extracellular space. It localises to the extracellular matrix. Functionally, plays a role during the calcification of cartilage and the transition of cartilage to bone. The polypeptide is Collagen alpha-1(XXVII) chain (COL27A1) (Homo sapiens (Human)).